The chain runs to 669 residues: Probable pectinesterase/pectinesterase inhibitor 21 (669 aa).

The helical transmembrane segment at 16–36 (IVITISSVLLISMVVAVTVGV) threads the bilayer. N-linked (GlcNAc...) asparagine glycosylation is found at Asn-52, Asn-81, Asn-94, Asn-281, and Asn-300. Positions 52 to 205 (NASVKAVKDV…IELTHNGLAI (154 aa)) are pectinesterase inhibitor 21. A pectinesterase 21 region spans residues 255–551 (DIVVAQDGSG…FTPAQYIQGD (297 aa)). Substrate is bound by residues Thr-330 and Gln-360. The Proton donor; for pectinesterase activity role is filled by Asp-383. Cys-397 and Cys-417 are disulfide-bonded. Residue Asp-404 is the Nucleophile; for pectinesterase activity of the active site. Asn-416 carries an N-linked (GlcNAc...) asparagine glycan. 2 residues coordinate substrate: Arg-472 and Trp-474. The disordered stretch occupies residues 615 to 669 (AYTGTASPESSIKVSSSTETASPESSFTEASTASPESSIMVASTESSGSFFSMFT). A compositionally biased stretch (polar residues) spans 616–628 (YTGTASPESSIKV). The segment covering 629–652 (SSSTETASPESSFTEASTASPESS) has biased composition (low complexity). Residues 654–669 (MVASTESSGSFFSMFT) are compositionally biased toward polar residues.

In the N-terminal section; belongs to the PMEI family. The protein in the C-terminal section; belongs to the pectinesterase family. In terms of tissue distribution, expressed in flower buds.

Its subcellular location is the membrane. The catalysed reaction is [(1-&gt;4)-alpha-D-galacturonosyl methyl ester](n) + n H2O = [(1-&gt;4)-alpha-D-galacturonosyl](n) + n methanol + n H(+). It participates in glycan metabolism; pectin degradation; 2-dehydro-3-deoxy-D-gluconate from pectin: step 1/5. Acts in the modification of cell walls via demethylesterification of cell wall pectin. The protein is Probable pectinesterase/pectinesterase inhibitor 21 (PME21) of Arabidopsis thaliana (Mouse-ear cress).